A 125-amino-acid polypeptide reads, in one-letter code: Small ribosomal subunit protein uS13 (125 aa).

Belongs to the universal ribosomal protein uS13 family. Part of the 30S ribosomal subunit. Forms a loose heterodimer with protein S19. Forms two bridges to the 50S subunit in the 70S ribosome.

Located at the top of the head of the 30S subunit, it contacts several helices of the 16S rRNA. In the 70S ribosome it contacts the 23S rRNA (bridge B1a) and protein L5 of the 50S subunit (bridge B1b), connecting the 2 subunits; these bridges are implicated in subunit movement. Contacts the tRNAs in the A and P-sites. In Rickettsia massiliae (strain Mtu5), this protein is Small ribosomal subunit protein uS13.